Consider the following 208-residue polypeptide: Uracil phosphoribosyltransferase (208 aa).

5-phospho-alpha-D-ribose 1-diphosphate is bound by residues R78, R103, and D130–S138. Residues I193 and G198 to A200 contribute to the uracil site. D199 is a 5-phospho-alpha-D-ribose 1-diphosphate binding site.

The protein belongs to the UPRTase family. It depends on Mg(2+) as a cofactor.

It catalyses the reaction UMP + diphosphate = 5-phospho-alpha-D-ribose 1-diphosphate + uracil. It functions in the pathway pyrimidine metabolism; UMP biosynthesis via salvage pathway; UMP from uracil: step 1/1. Its activity is regulated as follows. Allosterically activated by GTP. Functionally, catalyzes the conversion of uracil and 5-phospho-alpha-D-ribose 1-diphosphate (PRPP) to UMP and diphosphate. The polypeptide is Uracil phosphoribosyltransferase (Shewanella denitrificans (strain OS217 / ATCC BAA-1090 / DSM 15013)).